The chain runs to 144 residues: UPF0735 ACT domain-containing protein NT01CX_1681 (144 aa).

The ACT domain occupies 68–143; the sequence is TIGFLLSHKA…NVVKVSLIAM (76 aa).

It belongs to the UPF0735 family.

This chain is UPF0735 ACT domain-containing protein NT01CX_1681, found in Clostridium novyi (strain NT).